Reading from the N-terminus, the 838-residue chain is Protein translocase subunit SecA 1 (838 aa).

ATP contacts are provided by residues Gln85, 103 to 107 (GEGKT), and Asp493. Positions 823, 825, 834, and 835 each coordinate Zn(2+).

The protein belongs to the SecA family. As to quaternary structure, monomer and homodimer. Part of the essential Sec protein translocation apparatus which comprises SecA, SecYEG and auxiliary proteins SecDF. Other proteins may also be involved. Requires Zn(2+) as cofactor.

It localises to the cell membrane. The protein resides in the cytoplasm. The enzyme catalyses ATP + H2O + cellular proteinSide 1 = ADP + phosphate + cellular proteinSide 2.. Functionally, part of the Sec protein translocase complex. Interacts with the SecYEG preprotein conducting channel. Has a central role in coupling the hydrolysis of ATP to the transfer of proteins into and across the cell membrane, serving as an ATP-driven molecular motor driving the stepwise translocation of polypeptide chains across the membrane. This Streptococcus gordonii protein is Protein translocase subunit SecA 1.